The chain runs to 320 residues: MQSVKSGVLLVNLGTPQAPTPAAVKRYLKQFLSDRRVVDVPRFIWWPLLRGVILPLRSPRVAKLYKSIWMEEGSPLMVYSRRQEKALSAALGDVPVALGMSYGQPSLDSAVQKLLDQHVDHIIVLALYPQYSCSTVAAVWDELARITARYRKLPSMTLIRDYACEPAYISALAQSVQRSFEKHGEPDLLLLSYHGIPQRYADEGDDYPQRCRDTTRELVSALGIAPEKVMMTFQSRFGREPWLTPYTDETMKMLGEKGVKHIQVMCPGFSSDCLETLEEIAEQNREIFIEAGGEKYEYIPALNDEPAHIAMMKELVDRYR.

Fe cation is bound by residues His-194 and Glu-275.

Belongs to the ferrochelatase family.

It localises to the cytoplasm. The catalysed reaction is heme b + 2 H(+) = protoporphyrin IX + Fe(2+). The protein operates within porphyrin-containing compound metabolism; protoheme biosynthesis; protoheme from protoporphyrin-IX: step 1/1. Its function is as follows. Catalyzes the ferrous insertion into protoporphyrin IX. This chain is Ferrochelatase, found in Cronobacter sakazakii (strain ATCC BAA-894) (Enterobacter sakazakii).